Reading from the N-terminus, the 1526-residue chain is High affinity cGMP-specific 3',5'-cyclic phosphodiesterase 9A (1526 aa).

Low complexity predominate over residues 1-43 (MYQDSGCSSSSSRRGSSSAAAATSTAATAAETAAAAAATTTSS). Disordered stretches follow at residues 1-48 (MYQD…DEET), 266-348 (SSRS…SGTA), and 393-476 (RHHH…ASDC). 2 stretches are compositionally biased toward basic and acidic residues: residues 270-282 (RSSE…HEQD) and 305-314 (EHPSEKPERT). Composition is skewed to low complexity over residues 324–348 (IAVT…SGTA) and 401–440 (QQHQ…ATAT). A compositionally biased stretch (polar residues) spans 441-462 (PSVEQPATSGTTNIHLQPTSLP). Residues 664–985 (VKRRFLEICD…EYYRRLNDAQ (322 aa)) form the PDEase domain. The Proton donor role is filled by H740. 740 to 744 (HNFRH) is a binding site for 3',5'-cyclic GMP. Residues H744, H780, D781, and D890 each coordinate Zn(2+). 2 residues coordinate 3',5'-cyclic GMP: D781 and D890. D781 is a binding site for Mg(2+). Disordered stretches follow at residues 986 to 1170 (TKTR…SSGG), 1265 to 1284 (TEAD…KKIP), 1314 to 1351 (SNGS…GSSW), 1372 to 1406 (RFGS…DGLG), and 1469 to 1496 (RYSS…LTTG). Residues 993–1005 (ADSNTSATSDSNS) show a composition bias toward low complexity. Over residues 1033–1057 (NSQGSGGGGGGGGGGGAGGGTGSGC) the composition is skewed to gly residues. Residues 1065–1093 (VSPQMPRSGSGISVKSRRSIPSQKSASRT) are compositionally biased toward polar residues. The segment covering 1125 to 1136 (VAEKTSKFKVDT) has biased composition (basic and acidic residues). Over residues 1139-1148 (SSNRSKSSHS) the composition is skewed to low complexity. Residues 1314-1324 (SNGSTRSSASS) show a composition bias toward low complexity. Over residues 1325–1340 (GRGGSGVPGGSGGSGM) the composition is skewed to gly residues. Composition is skewed to low complexity over residues 1341 to 1350 (PGPSAGSGSS) and 1375 to 1397 (STRS…NANG). Residues 1470 to 1486 (YSSNDSSRHPSNNTLQS) are compositionally biased toward polar residues.

The protein belongs to the cyclic nucleotide phosphodiesterase family. PDE9 subfamily. The cofactor is Zn(2+). Mg(2+) is required as a cofactor. Expressed in Malpighian tubules and adult fly head.

The enzyme catalyses 3',5'-cyclic GMP + H2O = GMP + H(+). Its pathway is purine metabolism; 3',5'-cyclic GMP degradation; GMP from 3',5'-cyclic GMP: step 1/1. Its function is as follows. Specifically hydrolyzes the second messenger cGMP, which is a key regulator of many important physiological processes. Highly specific: compared to other members of the cyclic nucleotide phosphodiesterase family, has the highest affinity and selectivity for cGMP. The chain is High affinity cGMP-specific 3',5'-cyclic phosphodiesterase 9A from Drosophila melanogaster (Fruit fly).